Here is a 212-residue protein sequence, read N- to C-terminus: Ribosome biogenesis protein RLP7 (212 aa).

It belongs to the universal ribosomal protein uL30 family.

Its subcellular location is the nucleus. The protein localises to the nucleolus. In terms of biological role, involved in the biogenesis of the 60S ribosomal subunit. May act as a specificity factor that binds precursor rRNAs and tethers the enzymes that carry out the early 5' to 3' exonucleolytic reactions that generate the mature rRNAs. The chain is Ribosome biogenesis protein RLP7 (RLP7) from Cyberlindnera jadinii (Torula yeast).